We begin with the raw amino-acid sequence, 491 residues long: Chromosomal replication initiator protein DnaA (491 aa).

The interval 1–69 (MTTWDKCLKK…TIQECHGNDL (69 aa)) is domain I, interacts with DnaA modulators. The domain II stretch occupies residues 69 to 154 (LIIEYSNKKF…KEDEEYSFGL (86 aa)). The interval 155–371 (PLKEKYVFDS…GALNRVLTTS (217 aa)) is domain III, AAA+ region. ATP contacts are provided by Gly199, Gly201, Lys202, and Thr203. The segment at 372–491 (KFNHKDPTIE…YELLLDKISR (120 aa)) is domain IV, binds dsDNA.

It belongs to the DnaA family. Oligomerizes as a right-handed, spiral filament on DNA at oriC.

It is found in the cytoplasm. Plays an essential role in the initiation and regulation of chromosomal replication. ATP-DnaA binds to the origin of replication (oriC) to initiate formation of the DNA replication initiation complex once per cell cycle. Binds the DnaA box (a 9 base pair repeat at the origin) and separates the double-stranded (ds)DNA. Forms a right-handed helical filament on oriC DNA; dsDNA binds to the exterior of the filament while single-stranded (ss)DNA is stabiized in the filament's interior. The ATP-DnaA-oriC complex binds and stabilizes one strand of the AT-rich DNA unwinding element (DUE), permitting loading of DNA polymerase. After initiation quickly degrades to an ADP-DnaA complex that is not apt for DNA replication. Binds acidic phospholipids. The protein is Chromosomal replication initiator protein DnaA of Francisella tularensis subsp. holarctica (strain LVS).